We begin with the raw amino-acid sequence, 310 residues long: Methionyl-tRNA formyltransferase (310 aa).

109–112 (SLLP) provides a ligand contact to (6S)-5,6,7,8-tetrahydrofolate.

The protein belongs to the Fmt family.

It catalyses the reaction L-methionyl-tRNA(fMet) + (6R)-10-formyltetrahydrofolate = N-formyl-L-methionyl-tRNA(fMet) + (6S)-5,6,7,8-tetrahydrofolate + H(+). In terms of biological role, attaches a formyl group to the free amino group of methionyl-tRNA(fMet). The formyl group appears to play a dual role in the initiator identity of N-formylmethionyl-tRNA by promoting its recognition by IF2 and preventing the misappropriation of this tRNA by the elongation apparatus. This Parvibaculum lavamentivorans (strain DS-1 / DSM 13023 / NCIMB 13966) protein is Methionyl-tRNA formyltransferase.